We begin with the raw amino-acid sequence, 485 residues long: Zinc finger protein 577 (485 aa).

The disordered stretch occupies residues Met1–Gly21. Residues Leu23–Pro94 enclose the KRAB domain. The segment at His158–Glu180 adopts a C2H2-type 1; degenerate zinc-finger fold. 7 consecutive C2H2-type zinc fingers follow at residues His186–His208, His214–His236, Tyr242–His264, Tyr270–His292, Tyr298–His320, Tyr326–His348, and Tyr354–His376.

Belongs to the krueppel C2H2-type zinc-finger protein family.

Its subcellular location is the nucleus. In terms of biological role, may be involved in transcriptional regulation. This is Zinc finger protein 577 (ZNF577) from Homo sapiens (Human).